Consider the following 600-residue polypeptide: Tripeptidyl-peptidase 1 (600 aa).

A signal peptide spans 1-22 (MNIKFNLIIIILFILFISNVNC). The propeptide at 23–220 (KKIKNKKHLT…GGGGKVNGIG (198 aa)) is removed in mature form. Residues Asn-91, Asn-259, and Asn-266 are each glycosylated (N-linked (GlcNAc...) asparagine). In terms of domain architecture, Peptidase S53 spans 248–600 (YLSPDLIRKE…FDELVKYCLE (353 aa)). Catalysis depends on charge relay system residues Glu-318 and Asp-322. Cys-411 and Cys-570 are disulfide-bonded. Residues Asn-475 and Asn-483 are each glycosylated (N-linked (GlcNAc...) asparagine). Ser-514 (charge relay system) is an active-site residue. 4 residues coordinate Ca(2+): Asp-559, Ile-560, Gly-579, and Asp-581.

Monomer. Requires Ca(2+) as cofactor. In terms of processing, activated by autocatalytic proteolytical processing upon acidification. N-glycosylation is required for processing and activity.

It is found in the secreted. It catalyses the reaction Release of an N-terminal tripeptide from a polypeptide, but also has endopeptidase activity.. Its function is as follows. Serine protease with tripeptidyl-peptidase I activity. This is Tripeptidyl-peptidase 1 (tpp1) from Dictyostelium discoideum (Social amoeba).